A 284-amino-acid polypeptide reads, in one-letter code: MPELPEVEVTRRGLLPHVVGRRIADVTVRHRGLRWPVEDDLEARLAGRLVRRIERRGKYLLLECVDEATDDAGWLLVHLGMTGTLRVLPDAPPAGAHDHLDLVLDDAGGSRIVLRFRDPRRFGAVLWSPLSEAMLPGHPLLRGLGIEPFDSHFDGSWLHRHTRGRSAAIKTVLLAGNIVVGVGNIYASESLFRAGIRPTTPAGRLSLARCERLAQSVRETLAQAIERGGSTLRDFVGSDGASGYFQLECFVYDRAGEPCKVCGTPVRQIVQGQRSTFYCTHCQH.

Pro-2 functions as the Schiff-base intermediate with DNA in the catalytic mechanism. Glu-3 functions as the Proton donor in the catalytic mechanism. Lys-58 serves as the catalytic Proton donor; for beta-elimination activity. The DNA site is built by His-97, Arg-120, and Arg-165. The segment at 250–284 adopts an FPG-type zinc-finger fold; it reads FVYDRAGEPCKVCGTPVRQIVQGQRSTFYCTHCQH. Catalysis depends on Arg-274, which acts as the Proton donor; for delta-elimination activity.

It belongs to the FPG family. In terms of assembly, monomer. The cofactor is Zn(2+).

The catalysed reaction is Hydrolysis of DNA containing ring-opened 7-methylguanine residues, releasing 2,6-diamino-4-hydroxy-5-(N-methyl)formamidopyrimidine.. It catalyses the reaction 2'-deoxyribonucleotide-(2'-deoxyribose 5'-phosphate)-2'-deoxyribonucleotide-DNA = a 3'-end 2'-deoxyribonucleotide-(2,3-dehydro-2,3-deoxyribose 5'-phosphate)-DNA + a 5'-end 5'-phospho-2'-deoxyribonucleoside-DNA + H(+). Involved in base excision repair of DNA damaged by oxidation or by mutagenic agents. Acts as a DNA glycosylase that recognizes and removes damaged bases. Has a preference for oxidized purines, such as 7,8-dihydro-8-oxoguanine (8-oxoG). Has AP (apurinic/apyrimidinic) lyase activity and introduces nicks in the DNA strand. Cleaves the DNA backbone by beta-delta elimination to generate a single-strand break at the site of the removed base with both 3'- and 5'-phosphates. The polypeptide is Formamidopyrimidine-DNA glycosylase (Cupriavidus pinatubonensis (strain JMP 134 / LMG 1197) (Cupriavidus necator (strain JMP 134))).